The primary structure comprises 613 residues: Dihydroxy-acid dehydratase (613 aa).

Aspartate 81 provides a ligand contact to Mg(2+). Cysteine 122 serves as a coordination point for [2Fe-2S] cluster. Aspartate 123 and lysine 124 together coordinate Mg(2+). At lysine 124 the chain carries N6-carboxylysine. Residue cysteine 193 participates in [2Fe-2S] cluster binding. Glutamate 489 serves as a coordination point for Mg(2+). The Proton acceptor role is filled by serine 515.

It belongs to the IlvD/Edd family. As to quaternary structure, homodimer. The cofactor is [2Fe-2S] cluster. It depends on Mg(2+) as a cofactor.

It carries out the reaction (2R)-2,3-dihydroxy-3-methylbutanoate = 3-methyl-2-oxobutanoate + H2O. The catalysed reaction is (2R,3R)-2,3-dihydroxy-3-methylpentanoate = (S)-3-methyl-2-oxopentanoate + H2O. It functions in the pathway amino-acid biosynthesis; L-isoleucine biosynthesis; L-isoleucine from 2-oxobutanoate: step 3/4. Its pathway is amino-acid biosynthesis; L-valine biosynthesis; L-valine from pyruvate: step 3/4. Functionally, functions in the biosynthesis of branched-chain amino acids. Catalyzes the dehydration of (2R,3R)-2,3-dihydroxy-3-methylpentanoate (2,3-dihydroxy-3-methylvalerate) into 2-oxo-3-methylpentanoate (2-oxo-3-methylvalerate) and of (2R)-2,3-dihydroxy-3-methylbutanoate (2,3-dihydroxyisovalerate) into 2-oxo-3-methylbutanoate (2-oxoisovalerate), the penultimate precursor to L-isoleucine and L-valine, respectively. In Pseudomonas fluorescens (strain Pf0-1), this protein is Dihydroxy-acid dehydratase.